The sequence spans 643 residues: Inner kinetochore subunit cnp3 (643 aa).

Disordered regions lie at residues 55-209 and 224-386; these read SIHL…AFPD and SIKD…QSDS. 2 stretches are compositionally biased toward low complexity: residues 85–97 and 104–125; these read AASD…SSSD and DIPS…GSSG. The segment covering 166–185 has biased composition (basic and acidic residues); sequence DFSRIKASPDRKKFEPRRST. Polar residues-rich tracts occupy residues 235-261, 295-304, and 313-322; these read YIQT…PSKQ, LNRSLANNSQ, and KPLQESSINS. Composition is skewed to basic residues over residues 332–341 and 360–370; these read VKRKRGRPRK and GAKKPAIRNAK. Positions 333-345 form a DNA-binding region, a.T hook; it reads KRKRGRPRKNKLE.

Belongs to the CENP-C/MIF2 family. In terms of assembly, component of the inner kinetochore constitutive centromere-associated network (CCAN) (also known as central kinetochore Sim4 complex in fission yeast), which is composed of at least cnl2, cnp3, cnp20, fta1, fta2, fta3, fta4, fta6, fta7, mal2, mhf1, mhf2, mis6, mis15, mis17, sim4 and wip1.

The protein resides in the nucleus. It is found in the nucleoplasm. Functionally, component of the kinetochore, a multiprotein complex that assembles on centromeric DNA and attaches chromosomes to spindle microtubules, mediating chromosome segregation and sister chromatid segregation during meiosis and mitosis. Component of the inner kinetochore constitutive centromere-associated network (CCAN), which serves as a structural platform for outer kinetochore assembly. The polypeptide is Inner kinetochore subunit cnp3 (cnp3) (Schizosaccharomyces pombe (strain 972 / ATCC 24843) (Fission yeast)).